A 578-amino-acid chain; its full sequence is Glucans biosynthesis protein G (578 aa).

The first 37 residues, 1-37 (MIVSPCIAPRIPGTRLRKAMLAGVALVGLLSAGQLWA), serve as a signal peptide directing secretion. The interval 511–578 (VPVEAPKPAK…TWSYQLPADE (68 aa)) is disordered. A compositionally biased stretch (basic and acidic residues) spans 517–543 (KPAKDSKQDKAAAKHAHAKAEKAKAEQ). The span at 544-554 (PAEQPAADAAS) shows a compositional bias: low complexity.

Belongs to the OpgD/OpgG family.

It localises to the periplasm. Its pathway is glycan metabolism; osmoregulated periplasmic glucan (OPG) biosynthesis. In terms of biological role, involved in the biosynthesis of osmoregulated periplasmic glucans (OPGs). This Pseudomonas entomophila (strain L48) protein is Glucans biosynthesis protein G.